The sequence spans 253 residues: Chloride intracellular channel protein 4 (253 aa).

An N-acetylalanine modification is found at alanine 2. Positions 2–101 (ALSMPLNGLK…EEFLEEVLCP (100 aa)) are required for insertion into the membrane. The residue at position 4 (serine 4) is a Phosphoserine. Lysine 24 carries the post-translational modification N6-acetyllysine. A helical transmembrane segment spans residues 37–57 (FSQRLFMILWLKGVVFSVSTV). The GST C-terminal domain occupies 81–244 (NSEVKTDVNK…PSDKEVEIAY (164 aa)). N6-acetyllysine is present on lysine 130. Phosphoserine is present on residues serine 132, serine 167, and serine 236. Phosphotyrosine is present on tyrosine 244.

This sequence belongs to the chloride channel CLIC family. Monomer. Interacts with HRH3.

The protein localises to the cytoplasm. The protein resides in the cytoskeleton. Its subcellular location is the microtubule organizing center. It is found in the centrosome. It localises to the cytoplasmic vesicle membrane. The protein localises to the nucleus. The protein resides in the cell membrane. Its subcellular location is the mitochondrion. It is found in the cell junction. The enzyme catalyses chloride(in) = chloride(out). It catalyses the reaction thiocyanate(in) = thiocyanate(out). It carries out the reaction nitrate(in) = nitrate(out). The catalysed reaction is iodide(out) = iodide(in). The enzyme catalyses bromide(in) = bromide(out). It catalyses the reaction fluoride(in) = fluoride(out). It carries out the reaction choline(out) = choline(in). In terms of biological role, in the soluble state, catalyzes glutaredoxin-like thiol disulfide exchange reactions with reduced glutathione as electron donor. Can insert into membranes and form voltage-dependent multi-ion conductive channels. Membrane insertion seems to be redox-regulated and may occur only under oxidizing conditions. Has alternate cellular functions like a potential role in angiogenesis or in maintaining apical-basolateral membrane polarity during mitosis and cytokinesis. Could also promote endothelial cell proliferation and regulate endothelial morphogenesis (tubulogenesis). Promotes cell-surface expression of HRH3. The protein is Chloride intracellular channel protein 4 (CLIC4) of Pongo abelii (Sumatran orangutan).